The primary structure comprises 193 residues: dCTP deaminase (193 aa).

DCTP contacts are provided by residues 110-115, Asp128, 136-138, Tyr171, Lys178, and Gln182; these read RSSLAR and VLE. The active-site Proton donor/acceptor is the Glu138. Residues 169-193 are disordered; it reads RPYNRREDAKYRNQQGAVASRIDKD.

It belongs to the dCTP deaminase family. As to quaternary structure, homotrimer.

It catalyses the reaction dCTP + H2O + H(+) = dUTP + NH4(+). Its pathway is pyrimidine metabolism; dUMP biosynthesis; dUMP from dCTP (dUTP route): step 1/2. Its function is as follows. Catalyzes the deamination of dCTP to dUTP. The protein is dCTP deaminase of Escherichia coli O8 (strain IAI1).